A 262-amino-acid polypeptide reads, in one-letter code: MWKRYAAVLPANPWNWIAVWRRNYMAWKKAAIASILGNLAEPVTSLFGLGFGLGAMVGRVDGIPYVAFLAAGMVATSAMISATFETIHATFARMQAKRTWESALCTQLTLGDIVLGELAWAASKALLAGTAMMLVAATMGFASWPSVLFALPVIALTGFAFASLAMIVTALAPGYDYFIFYQTLFLTPMLFLSGAVFPVSQLPDIFQKLSHLLPLAHSIELIRPAMLDRPGGGVALHISALCIFAVMPFFLSVGLLQRRLLS.

One can recognise an ABC transmembrane type-2 domain in the interval 33-259 (ASILGNLAEP…FLSVGLLQRR (227 aa)). The next 6 helical transmembrane spans lie at 35-55 (ILGNLAEPVTSLFGLGFGLGA), 62-82 (GIPYVAFLAAGMVATSAMISA), 125-145 (ALLAGTAMMLVAATMGFASWP), 147-167 (VLFALPVIALTGFAFASLAMI), 177-197 (YFIFYQTLFLTPMLFLSGAVF), and 236-256 (LHISALCIFAVMPFFLSVGLL).

It belongs to the ABC-2 integral membrane protein family. Lipooligosaccharide exporter (TC 3.A.1.102) subfamily. In terms of assembly, the complex is composed of two ATP-binding proteins (NodI) and two transmembrane proteins (NodJ).

It localises to the cell inner membrane. Part of the ABC transporter complex NodIJ involved in the export of the nodulation factors (Nod factors), the bacterial signal molecules that induce symbiosis and subsequent nodulation induction. Nod factors are LCO (lipo-chitin oligosaccharide), a modified beta-1,4-linked N-acetylglucosamine oligosaccharide. This subunit encodes the transporter. This Sinorhizobium fredii (strain NBRC 101917 / NGR234) protein is Nodulation protein J (nodJ).